A 284-amino-acid polypeptide reads, in one-letter code: 2,3,4,5-tetrahydropyridine-2,6-dicarboxylate N-succinyltransferase (284 aa).

Substrate contacts are provided by Arg-111 and Asp-148.

The protein belongs to the transferase hexapeptide repeat family. In terms of assembly, homotrimer.

It is found in the cytoplasm. It catalyses the reaction (S)-2,3,4,5-tetrahydrodipicolinate + succinyl-CoA + H2O = (S)-2-succinylamino-6-oxoheptanedioate + CoA. Its pathway is amino-acid biosynthesis; L-lysine biosynthesis via DAP pathway; LL-2,6-diaminopimelate from (S)-tetrahydrodipicolinate (succinylase route): step 1/3. This Agrobacterium fabrum (strain C58 / ATCC 33970) (Agrobacterium tumefaciens (strain C58)) protein is 2,3,4,5-tetrahydropyridine-2,6-dicarboxylate N-succinyltransferase.